A 521-amino-acid polypeptide reads, in one-letter code: Bifunctional purine biosynthesis protein PurH (521 aa).

The 145-residue stretch at 1-145 folds into the MGS-like domain; that stretch reads MIKQALISVS…KNHRDVTVVV (145 aa).

The protein belongs to the PurH family.

The enzyme catalyses (6R)-10-formyltetrahydrofolate + 5-amino-1-(5-phospho-beta-D-ribosyl)imidazole-4-carboxamide = 5-formamido-1-(5-phospho-D-ribosyl)imidazole-4-carboxamide + (6S)-5,6,7,8-tetrahydrofolate. The catalysed reaction is IMP + H2O = 5-formamido-1-(5-phospho-D-ribosyl)imidazole-4-carboxamide. It participates in purine metabolism; IMP biosynthesis via de novo pathway; 5-formamido-1-(5-phospho-D-ribosyl)imidazole-4-carboxamide from 5-amino-1-(5-phospho-D-ribosyl)imidazole-4-carboxamide (10-formyl THF route): step 1/1. It functions in the pathway purine metabolism; IMP biosynthesis via de novo pathway; IMP from 5-formamido-1-(5-phospho-D-ribosyl)imidazole-4-carboxamide: step 1/1. The polypeptide is Bifunctional purine biosynthesis protein PurH (Paraburkholderia phymatum (strain DSM 17167 / CIP 108236 / LMG 21445 / STM815) (Burkholderia phymatum)).